Here is a 363-residue protein sequence, read N- to C-terminus: Peptide chain release factor 1 (363 aa).

Gln237 carries the N5-methylglutamine modification. Residues 284 to 296 are compositionally biased toward basic and acidic residues; the sequence is EDEKRRSAEESTR. A disordered region spans residues 284–305; sequence EDEKRRSAEESTRRSLVASGDR.

Belongs to the prokaryotic/mitochondrial release factor family. Post-translationally, methylated by PrmC. Methylation increases the termination efficiency of RF1.

It is found in the cytoplasm. Peptide chain release factor 1 directs the termination of translation in response to the peptide chain termination codons UAG and UAA. In Shewanella sp. (strain MR-4), this protein is Peptide chain release factor 1.